Here is a 181-residue protein sequence, read N- to C-terminus: Adenylate kinase (181 aa).

Residue Gly-10–Thr-15 coordinates ATP. The tract at residues Ser-30–Val-59 is NMP. AMP-binding positions include Thr-31, Arg-36, Asp-57–Val-59, Gly-85–Arg-88, and Gln-92. Residues Ala-126–Asp-132 are LID. Residue Arg-127 participates in ATP binding. Positions 129 and 140 each coordinate AMP. Gly-166 provides a ligand contact to ATP.

It belongs to the adenylate kinase family. In terms of assembly, monomer.

The protein localises to the cytoplasm. It catalyses the reaction AMP + ATP = 2 ADP. The protein operates within purine metabolism; AMP biosynthesis via salvage pathway; AMP from ADP: step 1/1. Functionally, catalyzes the reversible transfer of the terminal phosphate group between ATP and AMP. Plays an important role in cellular energy homeostasis and in adenine nucleotide metabolism. The protein is Adenylate kinase of Mycolicibacterium paratuberculosis (strain ATCC BAA-968 / K-10) (Mycobacterium paratuberculosis).